Reading from the N-terminus, the 320-residue chain is MAEITGLVLPFFGLIFLGYLTARLVDHPGEAMGWLNTFIVYLALPALFFKLVSRTPVEELTRADFILTSVGTTYVVFALIFAIGLFLRRNTVAEATMQGFAGAYGNIGYMGPGLALLALGETAAVPVALIFCFENAAHFTVAPAMMAAAGGSKQKPAVVALGIARRIAFHPFILSTFAGVAAAFLSFEPPLPLQRLIDYLAQAAAPCALFAMGVTLALRPLKRIPAEIGYIVPAKLVLHPVLMYLALSLGGAYDPIWVQTAVLLASLPTATNVFVIGQQYGVWQERASATILITTLLSVATVTGLLYLIRSGALPADLFP.

The next 8 membrane-spanning stretches (helical) occupy residues 1–21 (MAEI…GYLT), 32–52 (MGWL…FKLV), 65–85 (FILT…AIGL), 113–133 (GLAL…IFCF), 167–187 (IAFH…FLSF), 196–216 (LIDY…GVTL), 256–276 (IWVQ…VFVI), and 289–309 (ATIL…LYLI).

Belongs to the auxin efflux carrier (TC 2.A.69) family.

The protein resides in the cell membrane. The protein is Putative malonate transporter (mdcF) of Rhizobium meliloti (strain 1021) (Ensifer meliloti).